The following is a 107-amino-acid chain: Thioredoxin (107 aa).

Positions 2–107 (AGVLKNVTDD…ALLRPGPVPR (106 aa)) constitute a Thioredoxin domain. A disulfide bridge links Cys33 with Cys36.

The protein belongs to the thioredoxin family.

In terms of biological role, component of the thioredoxin-thioredoxin reductase system. Participates in various redox reactions through the reversible oxidation of its active center dithiol to a disulfide and catalyzes dithiol-disulfide exchange reactions. This is Thioredoxin (trxA) from Streptomyces clavuligerus.